The primary structure comprises 221 residues: Large ribosomal subunit protein uL4 (221 aa).

The interval 44–102 is disordered; that stretch reads AARQGTHKVKRRGEVRGGGKKPYRQKGTGRARQGSTRAPQFAGGGVVHGPTPRDYSQRT. The span at 61-72 shows a compositional bias: basic residues; the sequence is GGKKPYRQKGTG.

It belongs to the universal ribosomal protein uL4 family. As to quaternary structure, part of the 50S ribosomal subunit.

One of the primary rRNA binding proteins, this protein initially binds near the 5'-end of the 23S rRNA. It is important during the early stages of 50S assembly. It makes multiple contacts with different domains of the 23S rRNA in the assembled 50S subunit and ribosome. Functionally, forms part of the polypeptide exit tunnel. The protein is Large ribosomal subunit protein uL4 of Streptomyces avermitilis (strain ATCC 31267 / DSM 46492 / JCM 5070 / NBRC 14893 / NCIMB 12804 / NRRL 8165 / MA-4680).